The sequence spans 247 residues: E3 ubiquitin-protein ligase RNF182 (247 aa).

The RING-type zinc-finger motif lies at 20–68; it reads CKICYNRYNLKQRKPKVLECCHRVCAKCLYKIIDFGDSPQGVIVCPFCR. The next 2 helical transmembrane spans lie at 184-204 and 211-231; these read VLVW…IYLL and LGVV…VYGF.

In terms of assembly, interacts with ATP6V0C.

It is found in the membrane. The protein localises to the cytoplasm. The enzyme catalyses S-ubiquitinyl-[E2 ubiquitin-conjugating enzyme]-L-cysteine + [acceptor protein]-L-lysine = [E2 ubiquitin-conjugating enzyme]-L-cysteine + N(6)-ubiquitinyl-[acceptor protein]-L-lysine.. The protein operates within protein modification; protein ubiquitination. E3 ubiquitin-protein ligase that mediates the ubiquitination of ATP6V0C and targets it to degradation via the ubiquitin-proteasome pathway. Also plays a role in the inhibition of TLR-triggered innate immune response by mediating 'Lys'-48-linked ubiquitination and subsequent degradation of NF-kappa-B component RELA. The sequence is that of E3 ubiquitin-protein ligase RNF182 (Rnf182) from Rattus norvegicus (Rat).